The following is a 158-amino-acid chain: Urease accessory protein UreE (158 aa).

The protein belongs to the UreE family.

The protein resides in the cytoplasm. Involved in urease metallocenter assembly. Binds nickel. Probably functions as a nickel donor during metallocenter assembly. This chain is Urease accessory protein UreE, found in Klebsiella pneumoniae (strain 342).